The primary structure comprises 595 residues: Estrogen receptor (595 aa).

The tract at residues 1–184 is modulating (transactivation AF-1); mediates interaction with MACROD1; it reads MTMTLHTKAS…AMESAKETRY (184 aa). Serine 10 carries O-linked (GlcNAc) serine glycosylation. The tract at residues 35-47 is required for interaction with NCOA1; it reads LERPLGEVYVDSS. The interaction with DDX5; self-association stretch occupies residues 35-174; it reads LERPLGEVYV…LASTSDKGSM (140 aa). Phosphoserine; by CDK2 occurs at positions 104 and 106. Residue serine 118 is modified to Phosphoserine. Residues 144-174 form a disordered region; it reads AGPPAFYRPNSDNRRQGGRERLASTSDKGSM. The span at 154–165 shows a compositional bias: basic and acidic residues; sequence SDNRRQGGRERL. Residue serine 167 is modified to Phosphoserine; by CK2. 2 consecutive NR C4-type zinc fingers follow at residues 185–205 and 221–245; these read CAVC…CEGC and CPAT…LRKC. Residues 185–250 constitute a DNA-binding region (nuclear receptor); the sequence is CAVCNDYASG…RLRKCYEVGM (66 aa). The segment at 185–310 is mediates interaction with DNTTIP2; sequence CAVCNDYASG…TKKNSPVLSL (126 aa). Residues 251 to 310 form a hinge region; it reads MKGGIRKDRRGGRMLKHKRQRDDGEGRNEAVPPGDMRSANLWPSPLLIKHTKKNSPVLSL. The span at 257 to 269 shows a compositional bias: basic residues; sequence KDRRGGRMLKHKR. A disordered region spans residues 257–288; that stretch reads KDRRGGRMLKHKRQRDDGEGRNEAVPPGDMRS. Arginine 260 is modified (asymmetric dimethylarginine; by PRMT1). Residues 262–595 are interaction with AKAP13; that stretch reads GRMLKHKRQR…GEAENFPTTI (334 aa). The interval 264–594 is self-association; that stretch reads MLKHKRQRDD…TGEAENFPTT (331 aa). An NR LBD domain is found at 311-547; the sequence is TADQMISALL…DLLLEMLDAH (237 aa). The tract at residues 311-594 is transactivation AF-2; sequence TADQMISALL…TGEAENFPTT (284 aa). 17beta-estradiol is bound by residues glutamate 353 and arginine 394. Cysteine 447 carries the S-palmitoyl cysteine lipid modification. Histidine 524 provides a ligand contact to 17beta-estradiol. Tyrosine 537 is modified (phosphotyrosine; by Tyr-kinases). The disordered stretch occupies residues 551-575; the sequence is APTNLGGPPPEDMSQSQLATSGSTP. Polar residues predominate over residues 563–575; sequence MSQSQLATSGSTP.

This sequence belongs to the nuclear hormone receptor family. NR3 subfamily. In terms of assembly, binds DNA as a homodimer. Can form a heterodimer with ESR2. Interacts with coactivator NCOA5. Interacts with PELP1, the interaction is enhanced by 17-beta-estradiol; the interaction increases ESR1 transcriptional activity. Interacts with NCOA7; the interaction is ligand-inducible. Interacts with AKAP13, CUEDC2, HEXIM1, KDM5A, MAP1S, SMARD1, and UBE1C. Interacts with MUC1; the interaction is stimulated by 7 beta-estradiol (E2) and enhances ESR1-mediated transcription. Interacts with DNTTIP2, and UIMC1. Interacts with KMT2D/MLL2. Interacts with ATAD2; the interaction is enhanced by estradiol. Interacts with KIF18A and LDB1. Interacts with RLIM (via its C-terminus). Interacts with MACROD1. Interacts with SH2D4A and PLCG. Interacts with SH2D4A; the interaction blocks binding to PLCG and inhibits estrogen-induced cell proliferation. Interacts with DYNLL1. Interacts with CCDC62; the interaction requires estradiol and appears to enhance the transcription of target genes. Interacts with NR2C1; the interaction prevents homodimerization of ESR1 and suppresses its transcriptional activity and cell growth. Interacts with DNAAF4. Interacts with PRMT2. Interacts with RBFOX2. Interacts with EP300; the interaction is estrogen-dependent and enhanced by CITED1. Interacts with CITED1; the interaction is estrogen-dependent. Interacts with FAM120B, FOXL2, PHB2 and SLC30A9. Interacts with coactivators NCOA3 and NCOA6. Interacts with STK3/MST2 only in the presence of SAV1 and vice-versa. Binds to CSNK1D. Interacts with NCOA2; NCOA2 can interact with ESR1 AF-1 and AF-2 domains simultaneously and mediate their transcriptional synergy. Interacts with DDX5. Interacts with NCOA1; the interaction seems to require a self-association of N-terminal and C-terminal regions. Interacts with ZNF366, DDX17, NFKB1, RELA, SP1 and SP3. Interacts with NRIP1. Interacts with GPER1; the interaction occurs in an estrogen-dependent manner. Interacts with CLOCK and the interaction is stimulated by estrogen. Interacts with TRIP4 (ufmylated); estrogen dependent. Interacts with LMTK3; the interaction phosphorylates ESR1 (in vitro) and protects it against proteasomal degradation. Interacts with CCAR2 (via N-terminus) in a ligand-independent manner. Interacts with ZFHX3. Interacts with SFR1 in a ligand-dependent and -independent manner. Interacts with DCAF13, LATS1 and DCAF1; regulates ESR1 ubiquitination and ubiquitin-mediated proteasomal degradation. Interacts (via DNA-binding domain) with POU4F2 (C-terminus); this interaction increases the estrogen receptor ESR1 transcriptional activity in a DNA- and ligand 17-beta-estradiol-independent manner. Interacts with ESRRB isoform 1. Interacts with UBE3A and WBP2. Interacts with GTF2B. Interacts with RBM39. In the absence of hormonal ligand, interacts with TACC1. Interacts with PI3KR1 or PI3KR2 and PTK2/FAK1. Interacts with SRC. Interacts with BAG1; the interaction is promoted in the absence of estradiol (17-beta-estradiol/E2). Interacts with and ubiquitinated by STUB1; the interaction is promoted in the absence of estradiol (17-beta-estradiol/E2). Interacts with NEDD8. Post-translationally, phosphorylated by cyclin A/CDK2 and CK1. Phosphorylation probably enhances transcriptional activity. Dephosphorylation at Ser-118 by PPP5C inhibits its transactivation activity. Phosphorylated by LMTK3 (in vitro). Ubiquitinated; regulated by LATS1 via DCAF1 it leads to ESR1 proteasomal degradation. Deubiquitinated by OTUB1. Ubiquitinated by STUB1/CHIP; in the CA1 hippocampal region following loss of endogenous circulating estradiol (17-beta-estradiol/E2). Ubiquitinated by UBR5, leading to its degradation: UBR5 specifically recognizes and binds ligand-bound ESR1 when it is not associated with coactivators (NCOAs). In presence of NCOAs, the UBR5-degron is not accessible, preventing its ubiquitination and degradation. In terms of processing, palmitoylated at Cys-447 by ZDHHC7 and ZDHHC21. Palmitoylation is required for plasma membrane targeting and for rapid intracellular signaling via ERK and AKT kinases and cAMP generation, but not for signaling mediated by the nuclear hormone receptor. Post-translationally, dimethylated by PRMT1 at Arg-260. The methylation may favor cytoplasmic localization. Demethylated by JMJD6 at Arg-260.

The protein resides in the nucleus. It is found in the cytoplasm. The protein localises to the golgi apparatus. Its subcellular location is the cell membrane. Its function is as follows. Nuclear hormone receptor. The steroid hormones and their receptors are involved in the regulation of eukaryotic gene expression and affect cellular proliferation and differentiation in target tissues. Ligand-dependent nuclear transactivation involves either direct homodimer binding to a palindromic estrogen response element (ERE) sequence or association with other DNA-binding transcription factors, such as AP-1/c-Jun, c-Fos, ATF-2, Sp1 and Sp3, to mediate ERE-independent signaling. Ligand binding induces a conformational change allowing subsequent or combinatorial association with multiprotein coactivator complexes through LXXLL motifs of their respective components. Mutual transrepression occurs between the estrogen receptor (ER) and NF-kappa-B in a cell-type specific manner. Decreases NF-kappa-B DNA-binding activity and inhibits NF-kappa-B-mediated transcription from the IL6 promoter and displace RELA/p65 and associated coregulators from the promoter. Recruited to the NF-kappa-B response element of the CCL2 and IL8 promoters and can displace CREBBP. Present with NF-kappa-B components RELA/p65 and NFKB1/p50 on ERE sequences. Can also act synergistically with NF-kappa-B to activate transcription involving respective recruitment adjacent response elements; the function involves CREBBP. Can activate the transcriptional activity of TFF1. Also mediates membrane-initiated estrogen signaling involving various kinase cascades. Essential for MTA1-mediated transcriptional regulation of BRCA1 and BCAS3. Maintains neuronal survival in response to ischemic reperfusion injury when in the presence of circulating estradiol (17-beta-estradiol/E2). This is Estrogen receptor (ESR1) from Sus scrofa (Pig).